The sequence spans 121 residues: UPF0102 protein Hhal_2103 (121 aa).

Residues Met1 to Glu20 form a disordered region. Residues Asn9 to Glu20 show a composition bias toward basic and acidic residues.

This sequence belongs to the UPF0102 family.

The chain is UPF0102 protein Hhal_2103 from Halorhodospira halophila (strain DSM 244 / SL1) (Ectothiorhodospira halophila (strain DSM 244 / SL1)).